Consider the following 400-residue polypeptide: Nicotinate phosphoribosyltransferase (400 aa).

Histidine 220 bears the Phosphohistidine; by autocatalysis mark.

The protein belongs to the NAPRTase family. Post-translationally, transiently phosphorylated on a His residue during the reaction cycle. Phosphorylation strongly increases the affinity for substrates and increases the rate of nicotinate D-ribonucleotide production. Dephosphorylation regenerates the low-affinity form of the enzyme, leading to product release.

The enzyme catalyses nicotinate + 5-phospho-alpha-D-ribose 1-diphosphate + ATP + H2O = nicotinate beta-D-ribonucleotide + ADP + phosphate + diphosphate. The protein operates within cofactor biosynthesis; NAD(+) biosynthesis; nicotinate D-ribonucleotide from nicotinate: step 1/1. Functionally, catalyzes the synthesis of beta-nicotinate D-ribonucleotide from nicotinate and 5-phospho-D-ribose 1-phosphate at the expense of ATP. The polypeptide is Nicotinate phosphoribosyltransferase (Salmonella heidelberg (strain SL476)).